The following is a 453-amino-acid chain: uncharacterized protein (453 aa).

C74, C80, C83, and C162 together coordinate [4Fe-4S] cluster. Residues Q286, Y315, E336, and D384 each contribute to the S-adenosyl-L-methionine site. Residue C411 is the Nucleophile of the active site.

This sequence belongs to the class I-like SAM-binding methyltransferase superfamily. RNA M5U methyltransferase family.

This is an uncharacterized protein from Staphylococcus aureus (strain COL).